The following is a 500-amino-acid chain: Cytochrome P450 monooxygenase ausI (500 aa).

A helical transmembrane segment spans residues 8–28; that stretch reads LALLGQPLVPGLMVVSAILYL. C440 lines the heme pocket.

This sequence belongs to the cytochrome P450 family. Heme is required as a cofactor.

The protein resides in the membrane. It functions in the pathway secondary metabolite biosynthesis; terpenoid biosynthesis. Cytochrome P450 monooxygenase; part of the gene cluster B that mediates the biosynthesis of the fungal meroterpenoid acetoxydehydroaustin. The first step of the pathway is the synthesis of 3,5-dimethylorsellinic acid by the polyketide synthase ausA. 3,5-dimethylorsellinic acid is then prenylated by the polyprenyl transferase ausN. Further epoxidation by the FAD-dependent monooxygenase ausM and cyclization by the probable terpene cyclase ausL lead to the formation of protoaustinoid A. Protoaustinoid A is then oxidized to spiro-lactone preaustinoid A3 by the combined action of the FAD-binding monooxygenases ausB and ausC, and the dioxygenase ausE. Acid-catalyzed keto-rearrangement and ring contraction of the tetraketide portion of preaustinoid A3 by ausJ lead to the formation of preaustinoid A4. The aldo-keto reductase ausK, with the help of ausH, is involved in the next step by transforming preaustinoid A4 into isoaustinone which is in turn hydroxylated by the P450 monooxygenase ausI to form austinolide. The cytochrome P450 monooxygenase ausG then modifies austinolide to austinol. Austinol is further acetylated to austin by the O-acetyltransferase ausP, which spontaneously changes to dehydroaustin. The cytochrome P450 monooxygenase then converts dehydroaustin is into 7-dehydrodehydroaustin. The hydroxylation catalyzed by ausR permits the second O-acetyltransferase ausQ to add an additional acetyl group to the molecule, leading to the formation of acetoxydehydroaustin. Due to genetic rearrangements of the clusters and the subsequent loss of some enzymes, the end product of the Penicillium brasilianum austinoid biosynthesis clusters is acetoxydehydroaustin. This chain is Cytochrome P450 monooxygenase ausI, found in Penicillium brasilianum.